Reading from the N-terminus, the 354-residue chain is MGKVLAAALVGIAAALAAERLLAFRNRLNATREVDPVALPNCYLIKGIETGSEDIDILPNGLAFISSGLKYPGLKSFAPDKPGEIFLMDLNEKKPKASELRISRGFDVGSFNPHGISTYIDKDDTVYLFVVNHPHQKSTVELFKFMEDDNSLVHLKTIRHDLLTSVNDVVAVGPDSFYATNDHYFYDFILMFLEMYLGLTWSNVVYYSPKEVKEVAAGFYSANGINISPDKKYIYIADILDHNVHVMEKHADWNLTHVKTLQLDTLADNLSVDPDTGDIWTGCHPNGMKLFYDDPDNPPASEVLRIQNILAEQPTVTRVYAENGSVLQGTSVATVYDGKLLIGTVFHRALYCEL.

N29 carries N-linked (GlcNAc...) asparagine glycosylation. The cysteines at positions 42 and 352 are disulfide-linked. Positions 53 and 54 each coordinate Ca(2+). Residue H114 is the Proton acceptor of the active site. Ca(2+) is bound by residues I116, N167, D168, and N223. N-linked (GlcNAc...) asparagine glycosylation is present at N254. Ca(2+) contacts are provided by D268 and N269. N-linked (GlcNAc...) asparagine glycans are attached at residues N269 and N323.

This sequence belongs to the paraoxonase family. The cofactor is Ca(2+). Post-translationally, glycosylated. The signal sequence is not cleaved.

Its subcellular location is the membrane. The enzyme catalyses a phenyl acetate + H2O = a phenol + acetate + H(+). The catalysed reaction is An aryl dialkyl phosphate + H2O = dialkyl phosphate + an aryl alcohol.. Its function is as follows. The absence of paraoxonase activity in turkey and chicken blood and in turkey liver indicates that PON2, if expressed, does not hydrolyze paraoxon. The sequence is that of Serum paraoxonase/arylesterase 2 (PON2) from Gallus gallus (Chicken).